The chain runs to 476 residues: Adenosylhomocysteinase (476 aa).

3 residues coordinate substrate: T67, D142, and E202. 203–205 (TTT) lines the NAD(+) pocket. The substrate site is built by K232 and D236. NAD(+)-binding positions include N237, 266–271 (GYGDVG), E289, N324, 345–347 (IGH), and N390.

This sequence belongs to the adenosylhomocysteinase family. It depends on NAD(+) as a cofactor.

The protein localises to the cytoplasm. It catalyses the reaction S-adenosyl-L-homocysteine + H2O = L-homocysteine + adenosine. It participates in amino-acid biosynthesis; L-homocysteine biosynthesis; L-homocysteine from S-adenosyl-L-homocysteine: step 1/1. Functionally, may play a key role in the regulation of the intracellular concentration of adenosylhomocysteine. In Synechococcus sp. (strain WH7803), this protein is Adenosylhomocysteinase.